Here is a 223-residue protein sequence, read N- to C-terminus: Thiamine-phosphate synthase (223 aa).

4-amino-2-methyl-5-(diphosphooxymethyl)pyrimidine contacts are provided by residues 42 to 46 (QLRDK) and asparagine 83. 2 residues coordinate Mg(2+): aspartate 84 and aspartate 103. Serine 122 lines the 4-amino-2-methyl-5-(diphosphooxymethyl)pyrimidine pocket. Residue 148–150 (TPT) coordinates 2-[(2R,5Z)-2-carboxy-4-methylthiazol-5(2H)-ylidene]ethyl phosphate. Residue lysine 151 coordinates 4-amino-2-methyl-5-(diphosphooxymethyl)pyrimidine. Glycine 179 contributes to the 2-[(2R,5Z)-2-carboxy-4-methylthiazol-5(2H)-ylidene]ethyl phosphate binding site.

This sequence belongs to the thiamine-phosphate synthase family. Requires Mg(2+) as cofactor.

The catalysed reaction is 2-[(2R,5Z)-2-carboxy-4-methylthiazol-5(2H)-ylidene]ethyl phosphate + 4-amino-2-methyl-5-(diphosphooxymethyl)pyrimidine + 2 H(+) = thiamine phosphate + CO2 + diphosphate. The enzyme catalyses 2-(2-carboxy-4-methylthiazol-5-yl)ethyl phosphate + 4-amino-2-methyl-5-(diphosphooxymethyl)pyrimidine + 2 H(+) = thiamine phosphate + CO2 + diphosphate. It catalyses the reaction 4-methyl-5-(2-phosphooxyethyl)-thiazole + 4-amino-2-methyl-5-(diphosphooxymethyl)pyrimidine + H(+) = thiamine phosphate + diphosphate. It functions in the pathway cofactor biosynthesis; thiamine diphosphate biosynthesis; thiamine phosphate from 4-amino-2-methyl-5-diphosphomethylpyrimidine and 4-methyl-5-(2-phosphoethyl)-thiazole: step 1/1. In terms of biological role, condenses 4-methyl-5-(beta-hydroxyethyl)thiazole monophosphate (THZ-P) and 2-methyl-4-amino-5-hydroxymethyl pyrimidine pyrophosphate (HMP-PP) to form thiamine monophosphate (TMP). The chain is Thiamine-phosphate synthase from Mycolicibacterium paratuberculosis (strain ATCC BAA-968 / K-10) (Mycobacterium paratuberculosis).